The sequence spans 846 residues: uncharacterized protein (846 aa).

6 disordered regions span residues 159-217 (VPTF…INHI), 254-276 (CNLNGNNNNNNNNNNNNNNSNSN), 332-414 (NKLN…PLSI), 459-501 (GSSI…SNSL), 556-651 (QQQQ…NFND), and 803-846 (TTTT…NKNK). The segment covering 163 to 217 (HNQNQNNNNQNNNQNNNNNNNNNNNNNNNNNNNNNNNSQNNNNNQNNNNNHINHI) has biased composition (low complexity). Residues 355 to 414 (LQSPNSQSLANSSANISSNALNQSSSSQQQQPQSTSQQQQQQHKMNSSSGNISPPLPLSI) are compositionally biased toward low complexity. Over residues 459-482 (GSSITPKNLSPLSSSAPNTPKQFA) the composition is skewed to polar residues. Composition is skewed to low complexity over residues 483–501 (SLSSSSSPSSSTSSSSNSL), 568–642 (QQQQ…QPNN), and 811–846 (NNNNNNNNNNNNNNNNNNNNNNNNNNNNNNNNNKNK).

This is an uncharacterized protein from Dictyostelium discoideum (Social amoeba).